The chain runs to 370 residues: tRNA-specific 2-thiouridylase MnmA (370 aa).

Residues 20–27 and Met46 contribute to the ATP site; that span reads GMSGGVDS. The tract at residues 106–108 is interaction with target base in tRNA; the sequence is NPD. The Nucleophile role is filled by Cys111. Cys111 and Cys207 are joined by a disulfide. Gly135 lines the ATP pocket. The interval 157 to 159 is interaction with tRNA; it reads KDQ. Cys207 (cysteine persulfide intermediate) is an active-site residue. The interval 318–319 is interaction with tRNA; that stretch reads RY.

Belongs to the MnmA/TRMU family.

It localises to the cytoplasm. It carries out the reaction S-sulfanyl-L-cysteinyl-[protein] + uridine(34) in tRNA + AH2 + ATP = 2-thiouridine(34) in tRNA + L-cysteinyl-[protein] + A + AMP + diphosphate + H(+). In terms of biological role, catalyzes the 2-thiolation of uridine at the wobble position (U34) of tRNA, leading to the formation of s(2)U34. The chain is tRNA-specific 2-thiouridylase MnmA from Polynucleobacter asymbioticus (strain DSM 18221 / CIP 109841 / QLW-P1DMWA-1) (Polynucleobacter necessarius subsp. asymbioticus).